Here is a 492-residue protein sequence, read N- to C-terminus: Bifunctional purine biosynthesis protein PurH (492 aa).

Positions Met1–Val144 constitute an MGS-like domain.

The protein belongs to the PurH family.

It catalyses the reaction (6R)-10-formyltetrahydrofolate + 5-amino-1-(5-phospho-beta-D-ribosyl)imidazole-4-carboxamide = 5-formamido-1-(5-phospho-D-ribosyl)imidazole-4-carboxamide + (6S)-5,6,7,8-tetrahydrofolate. The catalysed reaction is IMP + H2O = 5-formamido-1-(5-phospho-D-ribosyl)imidazole-4-carboxamide. Its pathway is purine metabolism; IMP biosynthesis via de novo pathway; 5-formamido-1-(5-phospho-D-ribosyl)imidazole-4-carboxamide from 5-amino-1-(5-phospho-D-ribosyl)imidazole-4-carboxamide (10-formyl THF route): step 1/1. The protein operates within purine metabolism; IMP biosynthesis via de novo pathway; IMP from 5-formamido-1-(5-phospho-D-ribosyl)imidazole-4-carboxamide: step 1/1. The protein is Bifunctional purine biosynthesis protein PurH of Macrococcus caseolyticus (strain JCSC5402) (Macrococcoides caseolyticum).